The sequence spans 540 residues: Cobalt-factor III methyltransferase (540 aa).

[4Fe-4S] cluster contacts are provided by Cys-402, Cys-405, Cys-439, and Cys-443.

In the N-terminal section; belongs to the precorrin methyltransferase family. [4Fe-4S] cluster is required as a cofactor.

It carries out the reaction Co(II)-factor III + AH2 + S-adenosyl-L-methionine = Co-precorrin-4 + A + S-adenosyl-L-homocysteine. The protein operates within cofactor biosynthesis; adenosylcobalamin biosynthesis. Functionally, methyltransferase that catalyzes the reduction, ring contraction and methylation of C-17 in cobalt-factor III to form cobalt-precorrin-4. Is also able to convert cobalt-precorrin-3 to cobalt-precorrin-4. The polypeptide is Cobalt-factor III methyltransferase (cbiH60) (Priestia megaterium (Bacillus megaterium)).